The primary structure comprises 1464 residues: Neuropathy target esterase sws (1464 aa).

Over 1–34 (MDVLELLRASATGCYNTIFSEAWHQYVHKQIAAA) the chain is Lumenal. Residues 35–55 (VYWYGALFLLGVLLFVWFLYF) form a helical membrane-spanning segment. At 56–1464 (KRLARLRLRD…GNTTNNDTKN (1409 aa)) the chain is on the cytoplasmic side. 176–303 (IFGHFEKPIF…IRVIQVIMIR (128 aa)) is a binding site for a nucleoside 3',5'-cyclic phosphate. Disordered stretches follow at residues 329–393 (NKNS…LHYH) and 409–438 (QQQQ…SSPT). Over residues 338 to 367 (TGQTTSNVQSQTSQATQSRPSGTTRTPTSP) the composition is skewed to low complexity. The segment covering 409-420 (QQQQSLNSPRRN) has biased composition (polar residues). Serine 421 is modified (phosphoserine). The span at 422 to 438 (TAHVSEAAAASTASSPT) shows a compositional bias: low complexity. Residues 456–586 (ELGL…VVRR) and 575–702 (IVLG…LSHR) contribute to the a nucleoside 3',5'-cyclic phosphate site. The PNPLA domain maps to 928-1094 (LVLGGGGARG…VNNLPGHLWR (167 aa)). The short motif at 932 to 937 (GGGARG) is the GXGXXG element. The short motif at 959 to 963 (GVSIG) is the GXSXG element. Serine 961 (nucleophile) is an active-site residue. The active-site Proton acceptor is aspartate 1081. Positions 1081–1083 (DGG) match the DGA/G motif. The residue at position 1175 (serine 1175) is a Phosphoserine. 2 disordered regions span residues 1352 to 1374 (VDKA…PTPS) and 1400 to 1464 (ATNT…DTKN). Residues 1429-1444 (KRTEQDEHELEHEQVV) show a composition bias toward basic and acidic residues. The span at 1450–1464 (MDKQQGNTTNNDTKN) shows a compositional bias: polar residues.

The protein belongs to the NTE family. In terms of assembly, interacts with Pka-C3; interaction inhibits the catalytic function of Pka-C3 and the esterase activity of sws.

Its subcellular location is the endoplasmic reticulum membrane. It catalyses the reaction a 1-acyl-sn-glycero-3-phosphocholine + H2O = sn-glycerol 3-phosphocholine + a fatty acid + H(+). Its function is as follows. Phospholipase B that deacylates intracellular phosphatidylcholine (PtdCho), generating glycerophosphocholine (GroPtdCho). This deacylation occurs at both sn-2 and sn-1 positions of PtdCho. Its specific chemical modification by certain organophosphorus (OP) compounds leads to distal axonopathy. Plays a role in the signaling mechanism between neurons and glia that regulates glia wrapping during development of the adult brain. Essential for membrane lipid homeostasis and cell survival in both neurons and glia of the adult brain. The protein is Neuropathy target esterase sws of Drosophila grimshawi (Hawaiian fruit fly).